The chain runs to 172 residues: S-ribosylhomocysteine lyase (172 aa).

3 residues coordinate Fe cation: histidine 54, histidine 58, and cysteine 128.

Belongs to the LuxS family. In terms of assembly, homodimer. The cofactor is Fe cation.

The enzyme catalyses S-(5-deoxy-D-ribos-5-yl)-L-homocysteine = (S)-4,5-dihydroxypentane-2,3-dione + L-homocysteine. Involved in the synthesis of autoinducer 2 (AI-2) which is secreted by bacteria and is used to communicate both the cell density and the metabolic potential of the environment. The regulation of gene expression in response to changes in cell density is called quorum sensing. Catalyzes the transformation of S-ribosylhomocysteine (RHC) to homocysteine (HC) and 4,5-dihydroxy-2,3-pentadione (DPD). The chain is S-ribosylhomocysteine lyase from Photobacterium profundum (strain SS9).